The chain runs to 944 residues: Respiratory burst oxidase homolog protein F (944 aa).

At 2–387 the chain is on the cytoplasmic side; it reads KPFSKNDRRR…VYIMQENWKR (386 aa). 2 coiled-coil regions span residues 102–126 and 157–184; these read QFSQELKAEAVAKAKQLSQELKRFS and LEARALRKQRAQLDRTRSSAQRALRGLR. EF-hand-like regions lie at residues 207-215 and 241-252; these read EKNGYIYRS and RRLKVEKINHDE. 2 consecutive EF-hand domains span residues 264–299 and 308–343; these read SFDSRLQIFFDIVDKNEDGRITEEEVKEIIMLSASA and QAEEYAALIMEELDPERLGYIELWQLETLLLQKDTY. Residues Asp-277, Asn-279, Asp-281, Arg-283, Glu-288, Asp-321, and Tyr-327 each coordinate Ca(2+). Phosphoserine is present on residues Ser-354 and Ser-358. The chain crosses the membrane as a helical span at residues 388–408; that stretch reads IWVLSLWIMIMIGLFLWKFFQ. Over 409 to 475 the chain is Extracellular; sequence YKQKDAFHVM…INFHKTIAGA (67 aa). Residues 426–583 enclose the Ferric oxidoreductase domain; sequence KGAAETLKFN…LFVIVYILLI (158 aa). The helical transmembrane segment at 476 to 492 threads the bilayer; the sequence is IVVAVILHIGDHLACDF. The Cytoplasmic portion of the chain corresponds to 493–527; it reads PRIVRATEYDYNRYLFHYFQTKQPTYFDLVKGPEG. A helical membrane pass occupies residues 528–548; sequence ITGILMVILMIISFTLATRWF. The Extracellular segment spans residues 549–570; that stretch reads RRNLVKLPKPFDRLTGFNAFWY. A helical transmembrane segment spans residues 571–591; the sequence is SHHLFVIVYILLILHGIFLYF. The Cytoplasmic portion of the chain corresponds to 592 to 599; that stretch reads AKPWYVRT. A helical membrane pass occupies residues 600 to 617; that stretch reads TWMYLAVPVLLYGGERTL. Topologically, residues 618 to 744 are extracellular; sequence RYFRSGSYSV…PYGAPAQDYR (127 aa). The FAD-binding FR-type domain occupies 622–742; that stretch reads SGSYSVRLLK…DGPYGAPAQD (121 aa). A helical transmembrane segment spans residues 745–765; it reads KYDVLLLVGLGIGATPFISIL. The Cytoplasmic segment spans residues 766-944; it reads KDLLNNIVKM…TKFEFHKEHF (179 aa).

This sequence belongs to the RBOH (TC 5.B.1.3) family. In terms of assembly, monomer and homodimer. Interacts (via N-terminus) with CIPK26. Interacts (via N-terminus) with SRC2. Post-translationally, not glycosylated. Phosphorylated by CIPK26. Expressed in roots, stems, seedlings, inflorescences, leaves and guard cells.

Its subcellular location is the cell membrane. Inhibited by diphenylene iodonium (DPI). Its function is as follows. Calcium-dependent NADPH oxidase that generates superoxide. Generates reactive oxygen species (ROS) during incompatible interactions with pathogens and is important in the regulation of the hypersensitive response (HR). Involved in abscisic acid-induced stomatal closing and in UV-B and abscisic acid ROS-dependent signaling. This Arabidopsis thaliana (Mouse-ear cress) protein is Respiratory burst oxidase homolog protein F (RBOHF).